Here is a 181-residue protein sequence, read N- to C-terminus: Type II secretion system protein H (181 aa).

A propeptide spans 1–5 (MRQRG) (leader sequence). The residue at position 6 (phenylalanine 6) is an N-methylphenylalanine. A helical transmembrane segment spans residues 6-29 (FTLLEIMLVVLLAGVAATLVMMAI).

It belongs to the GSP H family. In terms of assembly, type II secretion is composed of four main components: the outer membrane complex, the inner membrane complex, the cytoplasmic secretion ATPase and the periplasm-spanning pseudopilus. Interacts with core component OutG. In terms of processing, cleaved by prepilin peptidase. Methylated by prepilin peptidase at the amino group of the N-terminal phenylalanine once the leader sequence is cleaved by prepilin peptidase.

The protein localises to the cell inner membrane. Component of the type II secretion system required for the energy-dependent secretion of extracellular factors such as proteases and toxins from the periplasm. Part of the pseudopilus tip complex that is critical for the recognition and binding of secretion substrates. The chain is Type II secretion system protein H (outH) from Dickeya chrysanthemi (Pectobacterium chrysanthemi).